We begin with the raw amino-acid sequence, 221 residues long: Thiopurine S-methyltransferase (221 aa).

Positions 12, 47, 68, and 125 each coordinate S-adenosyl-L-methionine.

It belongs to the class I-like SAM-binding methyltransferase superfamily. TPMT family.

The protein resides in the cytoplasm. The enzyme catalyses S-adenosyl-L-methionine + a thiopurine = S-adenosyl-L-homocysteine + a thiopurine S-methylether.. The sequence is that of Thiopurine S-methyltransferase from Legionella pneumophila (strain Paris).